Here is a 287-residue protein sequence, read N- to C-terminus: Large ribosomal subunit protein uL2 (287 aa).

Residues 221–287 are disordered; sequence RGSVMNPCDH…SKRSRGGRDS (67 aa). Positions 271 to 287 are enriched in basic residues; the sequence is LRKRRKTSKRSRGGRDS.

The protein belongs to the universal ribosomal protein uL2 family. As to quaternary structure, part of the 50S ribosomal subunit. Forms a bridge to the 30S subunit in the 70S ribosome.

Its function is as follows. One of the primary rRNA binding proteins. Required for association of the 30S and 50S subunits to form the 70S ribosome, for tRNA binding and peptide bond formation. It has been suggested to have peptidyltransferase activity; this is somewhat controversial. Makes several contacts with the 16S rRNA in the 70S ribosome. In Synechococcus sp. (strain CC9902), this protein is Large ribosomal subunit protein uL2.